Reading from the N-terminus, the 506-residue chain is Sodium transporter HKT1 (506 aa).

Over 1–19 (MDRVVAKIAKIRSQLTKLR) the chain is Cytoplasmic. A helical transmembrane segment spans residues 20-40 (SLFFLYFIYFLFFSFLGFLAL). The Extracellular segment spans residues 41-81 (KITKPRTTSRPHDFDLFFTSVSAITVSSMSTVDMEVFSNTQ). The chain crosses the membrane as a helical span at residues 82–102 (LIFLTILMFLGGEIFTSFLNL). Residues 103–159 (YVSYFTKFVFPHNKIRHILGSYNSDSSIEDRCDVETVTDYREGLIKIDERASKCLYS) lie on the Cytoplasmic side of the membrane. The helical transmembrane segment at 160 to 180 (VVLSYHLVTNLVGSVLLLVYV) threads the bilayer. The Extracellular portion of the chain corresponds to 181 to 232 (NFVKTARDVLSSKEISPLTFSVFTTVSTFANCGFVPTNENMIIFRKNSGLIW). Residues 233-253 (LLIPQVLMGNTLFPCFLVLLI) traverse the membrane as a helical segment. Residues 254 to 286 (WGLYKITKRDEYGYILKNHNKMGYSHLLSVRLC) lie on the Cytoplasmic side of the membrane. The chain crosses the membrane as a helical span at residues 287-307 (VLLGVTVLGFLIIQLLFFCAF). The Extracellular portion of the chain corresponds to 308-348 (EWTSESLEGMSSYEKLVGSLFQVVNSRHTGETIVDLSTLSP). The helical transmembrane segment at 349–369 (AILVLFILMMYLPPYTLFMPL) threads the bilayer. The Cytoplasmic segment spans residues 370–392 (TEQKTIEKEGGDDDSENGKKVKK). A helical membrane pass occupies residues 393-413 (SGLIVSQLSFLTICIFLISIT). The Extracellular portion of the chain corresponds to 414–465 (ERQNLQRDPINFNVLNITLEVISAYGNVGFTTGYSCERRVDISDGGCKDASY). An N-linked (GlcNAc...) asparagine glycan is attached at Asn-429. Residues 466 to 486 (GFAGRWSPMGKFVLIIVMFYG) form a helical membrane-spanning segment. Residues 487-506 (RFKQFTAKSGRAWILYPSSS) are Cytoplasmic-facing.

This sequence belongs to the TrkH potassium transport family. HKT (TC 2.A.38.3) subfamily. In terms of processing, N-glycosylated. Not essential for functional expression and membrane targeting. In terms of tissue distribution, highly expressed in roots. Expressed in flowers, leaves and stems. Expressed in the vascular tissues of every organs. In roots, leaves and flower peduncles, it is only expressed in the phloem tissues. Not expressed in root peripheral cells.

The protein resides in the cell membrane. The catalysed reaction is Na(+)(in) = Na(+)(out). In terms of biological role, sodium transporter protein, which plays a central role in plant tolerance to salt. Upon prolongated exposure to high concentrations, Na(+) translocates from the roots to the transpiring leaves where it can increase to toxic level. Involved in Na(+) recirculation from shoots to roots, probably by mediating Na(+) loading into the phloem sap in shoots and unloading in roots, thereby removing large amounts of Na(+) from the shoot. Does not transport K(+) but regulates K(+) nutrient status via its ability to facilitate Na(+) homeostasis. Probably not involved in root uptake of Na(+). The polypeptide is Sodium transporter HKT1 (HKT1) (Arabidopsis thaliana (Mouse-ear cress)).